A 95-amino-acid polypeptide reads, in one-letter code: DNA-directed RNA polymerase subunit Rpo6 (95 aa).

The protein belongs to the archaeal Rpo6/eukaryotic RPB6 RNA polymerase subunit family. Part of the 13-subunit RNA polymerase complex.

It localises to the cytoplasm. It catalyses the reaction RNA(n) + a ribonucleoside 5'-triphosphate = RNA(n+1) + diphosphate. DNA-dependent RNA polymerase (RNAP) catalyzes the transcription of DNA into RNA using the four ribonucleoside triphosphates as substrates. This chain is DNA-directed RNA polymerase subunit Rpo6, found in Saccharolobus solfataricus (strain ATCC 35092 / DSM 1617 / JCM 11322 / P2) (Sulfolobus solfataricus).